A 314-amino-acid chain; its full sequence is Pectin lyase (314 aa).

R202 is an active-site residue.

It belongs to the polysaccharide lyase 1 family.

The catalysed reaction is Eliminative cleavage of (1-&gt;4)-alpha-D-galacturonan methyl ester to give oligosaccharides with 4-deoxy-6-O-methyl-alpha-D-galact-4-enuronosyl groups at their non-reducing ends.. This chain is Pectin lyase (pnl), found in Pectobacterium carotovorum (Erwinia carotovora).